Here is a 429-residue protein sequence, read N- to C-terminus: Oxysterol-binding protein-like protein OBPalpha (429 aa).

This sequence belongs to the OSBP family.

This is Oxysterol-binding protein-like protein OBPalpha (OBPALPHA) from Candida albicans (strain SC5314 / ATCC MYA-2876) (Yeast).